The following is a 305-amino-acid chain: Ribonuclease BN (305 aa).

Residues histidine 64, histidine 66, aspartate 68, histidine 69, histidine 141, aspartate 212, and histidine 270 each coordinate Zn(2+). Residue aspartate 68 is the Proton acceptor of the active site.

This sequence belongs to the RNase Z family. RNase BN subfamily. In terms of assembly, homodimer. Zn(2+) is required as a cofactor.

Its function is as follows. Zinc phosphodiesterase, which has both exoribonuclease and endoribonuclease activities. The protein is Ribonuclease BN of Salmonella gallinarum (strain 287/91 / NCTC 13346).